A 98-amino-acid polypeptide reads, in one-letter code: Sm-like protein LSM3B (98 aa).

Position 2 is an N-acetylserine (serine 2). Positions 11–96 (EPLDLIRLSL…VILVSPPLRT (86 aa)) constitute a Sm domain.

The protein belongs to the snRNP Sm proteins family. Component of the heptameric LSM1-LSM7 complex that forms a seven-membered ring structure with a donut shape. The LSM subunits are arranged in the order LSM1, LSM2, LSM3, LSM6, LSM5, LSM7 and LSM4. Component of the heptameric LSM2-LSM8 complex that forms a seven-membered ring structure with a donut shape. The LSM subunits are arranged in the order LSM8, LSM2, LSM3, LSM6, LSM5, LSM7 and LSM4. LSM3B subunit interacts only with its two neighboring subunits, LSM2 and LSM6A or LSM6B. Expressed in roots, leaves, stems, flowers and siliques.

It is found in the cytoplasm. The protein localises to the nucleus. Component of LSM protein complexes, which are involved in RNA processing. Component of the cytoplasmic LSM1-LSM7 complex which is involved in mRNA degradation by promoting decapping and leading to accurate 5'-3' mRNA decay. The cytoplasmic LSM1-LSM7 complex regulates developmental gene expression by the decapping of specific development-related transcripts. Component of the nuclear LSM2-LSM8 complex which is involved splicing nuclear mRNAs. LSM2-LSM8 binds directly to the U6 small nuclear RNAs (snRNAs) and is essential for accurate splicing of selected development-related mRNAs through the stabilization of the spliceosomal U6 snRNA. Plays a critical role in the regulation of development-related gene expression. This Arabidopsis thaliana (Mouse-ear cress) protein is Sm-like protein LSM3B.